We begin with the raw amino-acid sequence, 101 residues long: Small ribosomal subunit protein uS14 (101 aa).

The span at 1-10 shows a compositional bias: basic and acidic residues; sequence MAKKSSIEKN. The segment at 1 to 23 is disordered; that stretch reads MAKKSSIEKNNRRKRMTGNAAAK.

The protein belongs to the universal ribosomal protein uS14 family. Part of the 30S ribosomal subunit. Contacts proteins S3 and S10.

Functionally, binds 16S rRNA, required for the assembly of 30S particles and may also be responsible for determining the conformation of the 16S rRNA at the A site. This is Small ribosomal subunit protein uS14 from Nitrobacter hamburgensis (strain DSM 10229 / NCIMB 13809 / X14).